Consider the following 259-residue polypeptide: 3'-5' ssDNA/RNA exonuclease TatD (259 aa).

A divalent metal cation contacts are provided by E92, H128, and H153.

It belongs to the metallo-dependent hydrolases superfamily. TatD-type hydrolase family. TatD subfamily. As to quaternary structure, monomer. The cofactor is Mg(2+).

It localises to the cytoplasm. In terms of biological role, 3'-5' exonuclease that prefers single-stranded DNA and RNA. May play a role in the H(2)O(2)-induced DNA damage repair. The sequence is that of 3'-5' ssDNA/RNA exonuclease TatD from Erwinia amylovora (strain ATCC 49946 / CCPPB 0273 / Ea273 / 27-3).